The sequence spans 223 residues: Kinetochore protein Spc25 (223 aa).

The stretch at 51–119 (RHQRKVGKLQ…NEIMERIQTL (69 aa)) forms a coiled coil.

This sequence belongs to the SPC25 family. As to quaternary structure, component of the Ndc80 complex, which is composed of Ndc80, Nuf2 and Spc25.

It is found in the nucleus. It localises to the chromosome. Its subcellular location is the centromere. The protein localises to the kinetochore. In terms of biological role, acts as a component of the essential kinetochore-associated Ndc80 complex, which is required for chromosome segregation and spindle checkpoint activity during meiosis and mitosis. Required for kinetochore integrity and the organization of stable microtubule binding sites in the outer plate of the kinetochore. Participates in SAC signaling that responds specifically to disruptions in spindle microtubule dynamics. The NDC80 complex synergistically enhances the affinity of the SKA1 complex for microtubules and may allow the NDC80 complex to track depolymerizing microtubules. This is Kinetochore protein Spc25 from Drosophila teissieri (Fruit fly).